The chain runs to 383 residues: Transcription factor Y1 (383 aa).

HTH myb-type domains follow at residues 9–61 (KVGL…INYL) and 62–116 (RADV…SRQI). 2 DNA-binding regions (H-T-H motif) span residues 37–61 (WRSLPKNAGLLRCGKSCRLRWINYL) and 89–112 (WSLIASHFPGRTDNEIKNYWNSHL). Residues 136-250 (SKLHSAEKRR…DATGPWELDP (115 aa)) are disordered. Low complexity-rich tracts occupy residues 155–170 (KSSSANTTTNTTSSKT) and 191–207 (ASSPPTAATTTSAASSP).

It is found in the nucleus. Its pathway is pigment biosynthesis. In terms of biological role, transcription factor involved in regulating the biosynthetic pathway of flavan-4-ol-derived red phlobaphene and red-brown 3-deoxyanthocyanidin (3-DA) pigments. Regulates transcription of chalcone synthase, chalcone isomerase, dihydroflavonol reductase and flavonoid 3'-hydroxylase genes required for the phlobaphene and 3-DA biosynthesis. Transcription of these genes is activated in mesocotyls in response to ingress of non-pathogenic fungus C.heterostrophus. Regulates the production of 3-DA phytoalexins (luteolinidin, 5-methoxyluteolinidin, apigeninidin and 7-methoxyapigeninidin) in mesocotyls in response to C.heterostrophus and corn leaf aphid (CLA) R.maidis. Involved in resistance against anthracnose leaf blight (ALB) caused by the pathogenic C.sublineolum fungus by inducing the production of 3-DA phytoalexins. Confers resistance, also by inducing the production of 3-DA phytoalexins, against CLA R.maidis, which is an insect and a pest. This chain is Transcription factor Y1, found in Sorghum bicolor (Sorghum).